We begin with the raw amino-acid sequence, 424 residues long: 3-oxo-tetronate kinase (424 aa).

ATP-binding positions include Ser264, 363–366 (GGET), and Gly408.

The protein belongs to the four-carbon acid sugar kinase family.

It catalyses the reaction 3-dehydro-L-erythronate + ATP = 3-dehydro-4-O-phospho-L-erythronate + ADP + H(+). It carries out the reaction 3-dehydro-D-erythronate + ATP = 3-dehydro-4-O-phospho-D-erythronate + ADP + H(+). Functionally, catalyzes the ATP-dependent phosphorylation of 3-oxo-tetronate to 3-oxo-tetronate 4-phosphate. This chain is 3-oxo-tetronate kinase, found in Methylobacterium radiotolerans (strain ATCC 27329 / DSM 1819 / JCM 2831 / NBRC 15690 / NCIMB 10815 / 0-1).